We begin with the raw amino-acid sequence, 143 residues long: D-aminoacyl-tRNA deacylase (143 aa).

The Gly-cisPro motif, important for rejection of L-amino acids motif lies at 135 to 136 (GP).

It belongs to the DTD family. Homodimer.

It localises to the cytoplasm. It carries out the reaction glycyl-tRNA(Ala) + H2O = tRNA(Ala) + glycine + H(+). The enzyme catalyses a D-aminoacyl-tRNA + H2O = a tRNA + a D-alpha-amino acid + H(+). Functionally, an aminoacyl-tRNA editing enzyme that deacylates mischarged D-aminoacyl-tRNAs. Also deacylates mischarged glycyl-tRNA(Ala), protecting cells against glycine mischarging by AlaRS. Acts via tRNA-based rather than protein-based catalysis; rejects L-amino acids rather than detecting D-amino acids in the active site. By recycling D-aminoacyl-tRNA to D-amino acids and free tRNA molecules, this enzyme counteracts the toxicity associated with the formation of D-aminoacyl-tRNA entities in vivo and helps enforce protein L-homochirality. The protein is D-aminoacyl-tRNA deacylase of Mycolicibacterium gilvum (strain PYR-GCK) (Mycobacterium gilvum (strain PYR-GCK)).